The following is a 148-amino-acid chain: MQLILLEKVANLGNLGDKVNVKAGYGRNYLLPYGKATAATAANVAAFEERRAELEKLAADKKASAETRAAQLAELEVTITATAGDEGKLFGSIGTHDIADALTASGVEVAKSEVRLPNGTIRNVGEYDVAVHLHSDVEATVRVVVVAA.

Belongs to the bacterial ribosomal protein bL9 family.

In terms of biological role, binds to the 23S rRNA. This is Large ribosomal subunit protein bL9 from Pseudomonas savastanoi pv. phaseolicola (strain 1448A / Race 6) (Pseudomonas syringae pv. phaseolicola (strain 1448A / Race 6)).